The chain runs to 620 residues: PAN2-PAN3 deadenylation complex subunit PAN3 (620 aa).

The segment at 7–36 (SAKGTLCKNILIYGYCKYENKGCAFSHRRN) adopts a C3H1-type zinc-finger fold. Disordered stretches follow at residues 39-73 (ANSG…QPST) and 95-168 (VFVP…QPGP). Composition is skewed to polar residues over residues 63 to 73 (NVNTPSFQPST) and 101 to 126 (TPAS…TVSN). The segment at 226-482 (QSYPGGPEIV…LESYIRKHLA (257 aa)) is pseudokinase domain. Residues Arg274, 323–330 (DYYPNAST), and 380–381 (SK) contribute to the ATP site. Residues 483–521 (IRLLDVVDMLEDSNDYLESQLSTELENARLVRLMTKINF) adopt a coiled-coil conformation. Residues 522-620 (IVDRPEWDNE…SVFRTITRGK (99 aa)) are knob domain.

Belongs to the protein kinase superfamily. PAN3 family. Homodimer. Forms a heterotrimer with a catalytic subunit PAN2 to form the poly(A)-nuclease (PAN) deadenylation complex. Interacts (via PAM-2 motif) with poly(A)-binding protein PAB1 (via PABC domain), conferring substrate specificity of the enzyme complex.

It is found in the cytoplasm. Its function is as follows. Regulatory subunit of the poly(A)-nuclease (PAN) deadenylation complex, one of two cytoplasmic mRNA deadenylases involved in mRNA turnover. PAN specifically shortens poly(A) tails of RNA and the activity is stimulated by poly(A)-binding protein PAB1. PAN deadenylation is followed by rapid degradation of the shortened mRNA tails by the CCR4-NOT complex. Deadenylated mRNAs are then degraded by two alternative mechanisms, namely exosome-mediated 3'-5' exonucleolytic degradation, or deadenylation-dependent mRNA decaping and subsequent 5'-3' exonucleolytic degradation by XRN1. May also be involved in post-transcriptional maturation of mRNA poly(A) tails. PAN3 acts as a positive regulator for PAN activity, recruiting the catalytic subunit PAN2 to mRNA via its interaction with RNA and with PAB1. This is PAN2-PAN3 deadenylation complex subunit PAN3 from Meyerozyma guilliermondii (strain ATCC 6260 / CBS 566 / DSM 6381 / JCM 1539 / NBRC 10279 / NRRL Y-324) (Yeast).